Here is a 200-residue protein sequence, read N- to C-terminus: ATP-dependent Clp protease proteolytic subunit (200 aa).

Serine 103 (nucleophile) is an active-site residue. Histidine 128 is an active-site residue.

It belongs to the peptidase S14 family. As to quaternary structure, fourteen ClpP subunits assemble into 2 heptameric rings which stack back to back to give a disk-like structure with a central cavity, resembling the structure of eukaryotic proteasomes.

It is found in the cytoplasm. The enzyme catalyses Hydrolysis of proteins to small peptides in the presence of ATP and magnesium. alpha-casein is the usual test substrate. In the absence of ATP, only oligopeptides shorter than five residues are hydrolyzed (such as succinyl-Leu-Tyr-|-NHMec, and Leu-Tyr-Leu-|-Tyr-Trp, in which cleavage of the -Tyr-|-Leu- and -Tyr-|-Trp bonds also occurs).. Cleaves peptides in various proteins in a process that requires ATP hydrolysis. Has a chymotrypsin-like activity. Plays a major role in the degradation of misfolded proteins. In Vibrio parahaemolyticus serotype O3:K6 (strain RIMD 2210633), this protein is ATP-dependent Clp protease proteolytic subunit.